Consider the following 152-residue polypeptide: Transcriptional regulator MraZ (152 aa).

SpoVT-AbrB domains lie at 5–52 (ASAI…PLDE) and 81–124 (AHEC…DEAA).

The protein belongs to the MraZ family. In terms of assembly, forms oligomers.

The protein resides in the cytoplasm. Its subcellular location is the nucleoid. This chain is Transcriptional regulator MraZ, found in Shewanella violacea (strain JCM 10179 / CIP 106290 / LMG 19151 / DSS12).